A 476-amino-acid polypeptide reads, in one-letter code: ATP synthase subunit beta (476 aa).

Position 152 to 159 (152 to 159) interacts with ATP; sequence GGAGVGKT.

It belongs to the ATPase alpha/beta chains family. As to quaternary structure, F-type ATPases have 2 components, CF(1) - the catalytic core - and CF(0) - the membrane proton channel. CF(1) has five subunits: alpha(3), beta(3), gamma(1), delta(1), epsilon(1). CF(0) has three main subunits: a(1), b(2) and c(9-12). The alpha and beta chains form an alternating ring which encloses part of the gamma chain. CF(1) is attached to CF(0) by a central stalk formed by the gamma and epsilon chains, while a peripheral stalk is formed by the delta and b chains.

The protein resides in the cell inner membrane. It catalyses the reaction ATP + H2O + 4 H(+)(in) = ADP + phosphate + 5 H(+)(out). Its function is as follows. Produces ATP from ADP in the presence of a proton gradient across the membrane. The catalytic sites are hosted primarily by the beta subunits. The protein is ATP synthase subunit beta of Acidiphilium cryptum (strain JF-5).